Consider the following 134-residue polypeptide: Large ribosomal subunit protein uL22 (134 aa).

Belongs to the universal ribosomal protein uL22 family. As to quaternary structure, part of the 50S ribosomal subunit.

This protein binds specifically to 23S rRNA; its binding is stimulated by other ribosomal proteins, e.g. L4, L17, and L20. It is important during the early stages of 50S assembly. It makes multiple contacts with different domains of the 23S rRNA in the assembled 50S subunit and ribosome. In terms of biological role, the globular domain of the protein is located near the polypeptide exit tunnel on the outside of the subunit, while an extended beta-hairpin is found that lines the wall of the exit tunnel in the center of the 70S ribosome. This is Large ribosomal subunit protein uL22 from Porphyromonas gingivalis (strain ATCC 33277 / DSM 20709 / CIP 103683 / JCM 12257 / NCTC 11834 / 2561).